The sequence spans 979 residues: UPF0182 protein Mb0065 (979 aa).

Transmembrane regions (helical) follow at residues 19–41, 63–85, 114–136, 174–196, 208–230, 261–280, and 285–307; these read LVTAGMGMLALLLFGPRLVDIYV, LAIVAAVALVVAGIVLAALLLAY, LFGWGIAVTLGVVCGLIASFDWV, WLFVAVVLAFLASLLTHYLFGGL, AARVQLAVFAGAVVLLKAVAYWL, LVLVAIAVLCAVSFFTAIFL, and IPAMAAALLVLSAILVGGLWPLL. Positions 898–948 are disordered; it reads GTGRVATAPGGDAASAPPPGAGGPAPPQAVPPPRTTQPPAAPPRGPDVPPA. The span at 902-912 shows a compositional bias: low complexity; sequence VATAPGGDAAS. A compositionally biased stretch (pro residues) spans 913–946; the sequence is APPPGAGGPAPPQAVPPPRTTQPPAAPPRGPDVP.

The protein belongs to the UPF0182 family.

The protein resides in the cell membrane. The polypeptide is UPF0182 protein Mb0065 (Mycobacterium bovis (strain ATCC BAA-935 / AF2122/97)).